We begin with the raw amino-acid sequence, 243 residues long: tRNA1(Val) (adenine(37)-N6)-methyltransferase (243 aa).

This sequence belongs to the methyltransferase superfamily. tRNA (adenine-N(6)-)-methyltransferase family.

Its subcellular location is the cytoplasm. It carries out the reaction adenosine(37) in tRNA1(Val) + S-adenosyl-L-methionine = N(6)-methyladenosine(37) in tRNA1(Val) + S-adenosyl-L-homocysteine + H(+). Functionally, specifically methylates the adenine in position 37 of tRNA(1)(Val) (anticodon cmo5UAC). The polypeptide is tRNA1(Val) (adenine(37)-N6)-methyltransferase (Shewanella woodyi (strain ATCC 51908 / MS32)).